The primary structure comprises 121 residues: Holo-[acyl-carrier-protein] synthase (121 aa).

Positions 5 and 50 each coordinate Mg(2+).

This sequence belongs to the P-Pant transferase superfamily. AcpS family. It depends on Mg(2+) as a cofactor.

It is found in the cytoplasm. It catalyses the reaction apo-[ACP] + CoA = holo-[ACP] + adenosine 3',5'-bisphosphate + H(+). Transfers the 4'-phosphopantetheine moiety from coenzyme A to a Ser of acyl-carrier-protein. This Sulfurimonas denitrificans (strain ATCC 33889 / DSM 1251) (Thiomicrospira denitrificans (strain ATCC 33889 / DSM 1251)) protein is Holo-[acyl-carrier-protein] synthase.